A 106-amino-acid polypeptide reads, in one-letter code: Cell division topological specificity factor (106 aa).

This sequence belongs to the MinE family.

In terms of biological role, prevents the cell division inhibition by proteins MinC and MinD at internal division sites while permitting inhibition at polar sites. This ensures cell division at the proper site by restricting the formation of a division septum at the midpoint of the long axis of the cell. The sequence is that of Cell division topological specificity factor from Prochlorococcus marinus (strain SARG / CCMP1375 / SS120).